A 276-amino-acid chain; its full sequence is HTH-type transcriptional activator RhaR (276 aa).

In terms of domain architecture, HTH araC/xylS-type spans 174-272; it reads ESLFSALNQS…SCTPTEYRSR (99 aa). 2 DNA-binding regions (H-T-H motif) span residues 191–212 and 239–262; these read ADFC…KQQT and VANI…GKTF.

Binds DNA as a dimer.

The protein localises to the cytoplasm. Activates expression of the rhaSR operon in response to L-rhamnose. This Mannheimia succiniciproducens (strain KCTC 0769BP / MBEL55E) protein is HTH-type transcriptional activator RhaR.